A 349-amino-acid polypeptide reads, in one-letter code: Ion-translocating oxidoreductase complex subunit D (349 aa).

A run of 4 helical transmembrane segments spans residues 20-40, 42-62, 83-105, and 120-140; these read IMFL…YFFG, GVLI…IIIL, VLLG…CFFA, and IFNP…VHMT. At threonine 184 the chain carries FMN phosphoryl threonine. Transmembrane regions (helical) follow at residues 212–232, 236–256, 263–283, 291–311, and 319–339; these read IVSI…CFLL, VICW…SSIT, FFCS…AFFI, SCTK…VWII, and DGIA…DAYL.

The protein belongs to the NqrB/RnfD family. The complex is composed of six subunits: RnfA, RnfB, RnfC, RnfD, RnfE and RnfG. The cofactor is FMN.

Its subcellular location is the cell inner membrane. Functionally, part of a membrane-bound complex that couples electron transfer with translocation of ions across the membrane. This Buchnera aphidicola subsp. Schizaphis graminum (strain Sg) protein is Ion-translocating oxidoreductase complex subunit D.